A 361-amino-acid chain; its full sequence is Alanine racemase 2 (361 aa).

K30 (proton acceptor; specific for D-alanine) is an active-site residue. N6-(pyridoxal phosphate)lysine is present on K30. Residue R122 participates in substrate binding. Residue Y256 is the Proton acceptor; specific for L-alanine of the active site. Substrate is bound at residue M303.

It belongs to the alanine racemase family. Pyridoxal 5'-phosphate is required as a cofactor.

It catalyses the reaction L-alanine = D-alanine. Its pathway is amino-acid biosynthesis; D-alanine biosynthesis; D-alanine from L-alanine: step 1/1. In terms of biological role, catalyzes the interconversion of L-alanine and D-alanine. May also act on other amino acids. In Staphylococcus aureus (strain Mu50 / ATCC 700699), this protein is Alanine racemase 2 (alr2).